We begin with the raw amino-acid sequence, 1896 residues long: Trinucleotide repeat-containing gene 6A protein (1896 aa).

Composition is skewed to basic and acidic residues over residues 1–21 and 39–57; these read MREL…RDLV and KKKE…KVPE. Disordered regions lie at residues 1–137, 159–209, 222–250, and 257–276; these read MREL…LLKR, SESS…DCST, EAWP…SESE, and ASGN…GLGS. The interval 1 to 917 is interaction with argonaute family proteins; the sequence is MRELEAKATK…GDPPKCNQSL (917 aa). 2 stretches are compositionally biased toward low complexity: residues 69–93 and 101–113; these read ANSD…ASNQ and QQPQ…QQPQ. Over residues 125–137 the composition is skewed to basic residues; that stretch reads RFRHQEHKQLLKR. Positions 239-488 are sufficient for interaction with AGO1, AGO3 and AGO4; it reads IDADSASNSE…QAPSVMNGTS (250 aa). 5 sufficient for interaction with AGO2 regions span residues 255–331, 303–384, 325–424, 394–480, and 487–736; these read VMAS…NAWG, GALI…STIG, NRMN…KVSF, SKVS…QIQA, and TSLS…NGTE. Polar residues-rich tracts occupy residues 396-410 and 417-429; these read VSGS…SLQE and SGTQ…GQPQ. 5 disordered regions span residues 396–461, 548–683, 703–998, 1011–1126, and 1143–1182; these read VSGS…NELP, FQVN…RRKI, LSNS…DPSK, IPEA…PTGW, and QELN…NKQE. The span at 430-443 shows a compositional bias: low complexity; it reads NITTETTGPNNTTN. The span at 444-461 shows a compositional bias: polar residues; that stretch reads FMTSSLPNSGSVQNNELP. Residues 551-1279 form a sufficient for interaction with AGO1 and AGO4 region; sequence NTNKGGGVWE…MFGVGNTAAQ (729 aa). Gly residues predominate over residues 573 to 584; sequence SGNGANSGGSRR. Polar residues-rich tracts occupy residues 591–617 and 635–647; these read QNTG…SANG and GSAT…QNSV. Residues 665–683 show a composition bias toward basic and acidic residues; that stretch reads GRLEEKVTGESQSRDRRKI. Over residues 703–722 the composition is skewed to polar residues; it reads LSNSGWGQTPIKQNTAWDTE. Over residues 723 to 733 the composition is skewed to basic and acidic residues; it reads TSPRGERKTDN. Ser-724 carries the post-translational modification Phosphoserine. The span at 738–766 shows a compositional bias: polar residues; it reads WGSSATQTFNSGACTDKTSPNSNDTSSVS. Residues 858–871 are compositionally biased toward low complexity; the sequence is SSSGGSDSDRSISG. Ser-863 carries the phosphoserine modification. Polar residues-rich tracts occupy residues 876–906 and 924–937; these read GKTS…SSQG and KPVS…QQDI. Position 976 is a phosphoserine (Ser-976). Polar residues-rich tracts occupy residues 1033 to 1042, 1054 to 1064, and 1082 to 1105; these read AVSSKETSSG, TPATTVDNGTS, and AASN…SGPK. Residues 1059-1129 form a sufficient for interaction with AGO2 region; that stretch reads VDNGTSAWGK…GSRPTGWEEE (71 aa). Low complexity predominate over residues 1143–1163; it reads QELNSSLNWPPYTKKMSSKGL. Phosphoserine occurs at positions 1197 and 1255. Disordered stretches follow at residues 1234–1256, 1273–1306, and 1360–1395; these read GDYN…ESSM, VGNT…PPPL, and QRAQ…QSRQ. Composition is skewed to low complexity over residues 1284–1296 and 1360–1376; these read QQPP…SSQP and QRAQ…RQQQ. Thr-1406 carries the phosphothreonine modification. 2 disordered regions span residues 1512-1570 and 1659-1685; these read MNSS…VTPG and PKNI…WDNS. At Ser-1520 the chain carries Phosphoserine. A sufficient for interaction with AGO2 region spans residues 1605–1896; that stretch reads TSAWSSIRAS…DHLGGGGESM (292 aa). The region spanning 1716–1788 is the RRM domain; that stretch reads NWLVLKNLTP…TTILAEFASE (73 aa). A phosphoserine mark is found at Ser-1804 and Ser-1825.

This sequence belongs to the GW182 family. As to quaternary structure, interacts with AGO2. Interacts with AGO1, AGO3 and AGO4. Interacts with CNOT1; the interaction is direct and mediates the association with the CCR4-NOT complex. Interacts with ZC3H12A. Interacts with SND1. Interacts with GARRE1.

The protein localises to the cytoplasm. It is found in the P-body. Its function is as follows. Plays a role in RNA-mediated gene silencing by both micro-RNAs (miRNAs) and short interfering RNAs (siRNAs). Required for miRNA-dependent repression of translation and for siRNA-dependent endonucleolytic cleavage of complementary mRNAs by argonaute family proteins. As a scaffolding protein, associates with argonaute proteins bound to partially complementary mRNAs, and can simultaneously recruit CCR4-NOT and PAN deadenylase complexes. This chain is Trinucleotide repeat-containing gene 6A protein (Tnrc6a), found in Mus musculus (Mouse).